The chain runs to 957 residues: Glycine dehydrogenase (decarboxylating) (957 aa).

At Lys708 the chain carries N6-(pyridoxal phosphate)lysine.

It belongs to the GcvP family. As to quaternary structure, the glycine cleavage system is composed of four proteins: P, T, L and H. Pyridoxal 5'-phosphate serves as cofactor.

The catalysed reaction is N(6)-[(R)-lipoyl]-L-lysyl-[glycine-cleavage complex H protein] + glycine + H(+) = N(6)-[(R)-S(8)-aminomethyldihydrolipoyl]-L-lysyl-[glycine-cleavage complex H protein] + CO2. In terms of biological role, the glycine cleavage system catalyzes the degradation of glycine. The P protein binds the alpha-amino group of glycine through its pyridoxal phosphate cofactor; CO(2) is released and the remaining methylamine moiety is then transferred to the lipoamide cofactor of the H protein. The protein is Glycine dehydrogenase (decarboxylating) of Enterobacter sp. (strain 638).